Here is a 330-residue protein sequence, read N- to C-terminus: Peroxidase 70 (330 aa).

The first 24 residues, Met-1–Ala-24, serve as a signal peptide directing secretion. Intrachain disulfides connect Cys-43/Cys-119, Cys-76/Cys-81, Cys-125/Cys-326, and Cys-202/Cys-234. The active-site Proton acceptor is His-74. 5 residues coordinate Ca(2+): Asp-75, Val-78, Gly-80, Asp-82, and Ser-84. Pro-165 provides a ligand contact to substrate. His-195 serves as a coordination point for heme b. Thr-196 provides a ligand contact to Ca(2+). Ca(2+) contacts are provided by Asp-247, Ser-250, and Asp-255.

It belongs to the peroxidase family. Classical plant (class III) peroxidase subfamily. It depends on heme b as a cofactor. Requires Ca(2+) as cofactor.

The protein localises to the secreted. It catalyses the reaction 2 a phenolic donor + H2O2 = 2 a phenolic radical donor + 2 H2O. In terms of biological role, removal of H(2)O(2), oxidation of toxic reductants, biosynthesis and degradation of lignin, suberization, auxin catabolism, response to environmental stresses such as wounding, pathogen attack and oxidative stress. These functions might be dependent on each isozyme/isoform in each plant tissue. The sequence is that of Peroxidase 70 (PER70) from Arabidopsis thaliana (Mouse-ear cress).